A 617-amino-acid chain; its full sequence is tRNA 5-methylaminomethyl-2-thiouridine biosynthesis bifunctional protein MnmC (617 aa).

Positions 1 to 226 (MLDWQNGQLY…KREMLQGDLP (226 aa)) are tRNA (mnm(5)s(2)U34)-methyltransferase. An FAD-dependent cmnm(5)s(2)U34 oxidoreductase region spans residues 241 to 617 (IGGGIAGCAA…SPAIPVSIKG (377 aa)).

This sequence in the N-terminal section; belongs to the methyltransferase superfamily. tRNA (mnm(5)s(2)U34)-methyltransferase family. The protein in the C-terminal section; belongs to the DAO family. Requires FAD as cofactor.

It is found in the cytoplasm. The catalysed reaction is 5-aminomethyl-2-thiouridine(34) in tRNA + S-adenosyl-L-methionine = 5-methylaminomethyl-2-thiouridine(34) in tRNA + S-adenosyl-L-homocysteine + H(+). In terms of biological role, catalyzes the last two steps in the biosynthesis of 5-methylaminomethyl-2-thiouridine (mnm(5)s(2)U) at the wobble position (U34) in tRNA. Catalyzes the FAD-dependent demodification of cmnm(5)s(2)U34 to nm(5)s(2)U34, followed by the transfer of a methyl group from S-adenosyl-L-methionine to nm(5)s(2)U34, to form mnm(5)s(2)U34. This chain is tRNA 5-methylaminomethyl-2-thiouridine biosynthesis bifunctional protein MnmC, found in Nitrosospira multiformis (strain ATCC 25196 / NCIMB 11849 / C 71).